Reading from the N-terminus, the 2083-residue chain is Non-reducing polyketide synthase curS2 (2083 aa).

The N-terminal acylcarrier protein transacylase domain (SAT) stretch occupies residues 9–246 (LLFGDVTDPW…NELDIHALQH (238 aa)). One can recognise a Ketosynthase family 3 (KS3) domain in the interval 366–798 (RDGIAIVGMA…GGNACLLLED (433 aa)). Catalysis depends on for beta-ketoacyl synthase activity residues Cys543, His678, and His717. The tract at residues 895-1201 (VFVFTGQGSH…THTLQPNTHN (307 aa)) is malonyl-CoA:ACP transacylase (MAT) domain. Ser986 (for acyl/malonyl transferase activity) is an active-site residue. The N-terminal hotdog fold stretch occupies residues 1276–1415 (AQYLVSKSSS…DPAKTQADWD (140 aa)). A PKS/mFAS DH domain is found at 1276-1585 (AQYLVSKSSS…YQELPRVTWK (310 aa)). The product template (PT) domain stretch occupies residues 1285–1581 (SPKVQVVFRA…IDLRYQELPR (297 aa)). The interval 1437–1585 (GHRMQPEVFY…YQELPRVTWK (149 aa)) is C-terminal hotdog fold. A Carrier domain is found at 1637–1714 (DFDEGLVDAI…DLRRAFGANK (78 aa)). An O-(pantetheine 4'-phosphoryl)serine modification is found at Ser1674. The interval 1710-1790 (FGANKPKTSK…KMDETDTSPA (81 aa)) is disordered. Residues 1718–1736 (SKPQPGSTTPSSSQSSIPS) show a composition bias toward low complexity. Over residues 1745 to 1754 (MSDTASSLGS) the composition is skewed to polar residues. Positions 1771 to 1784 (LEPKPNHHLGKMDE) are enriched in basic and acidic residues. The interval 1811–2058 (MMADGTGTIA…LSVAGDHLDL (248 aa)) is thioesterase (TE) domain. Catalysis depends on His2065, which acts as the For thioesterase activity.

Its pathway is mycotoxin biosynthesis. Non-reducing polyketide synthase; part of the gene cluster that mediates the biosynthesis of 10,11-dehydrocurvularin, a prevalent fungal phytotoxin with heat shock response and immune-modulatory activities. The highly reducing polyketide synthase curS1 is responsible for biosynthesis up to the tetraketide stage. The non-reducing polyketide synthase curS2 then conducts four additional chain extension cycles, producing the unreduced part of the nascent octaketide from C-1 to C-8 in 10,11-dehydrocurvularin. This chain is Non-reducing polyketide synthase curS2, found in Aspergillus terreus.